We begin with the raw amino-acid sequence, 900 residues long: E3 ubiquitin-protein ligase BRE1-like 2 (900 aa).

The segment at 1-31 (MENQESDEPMQKKPHLLDSVSPNSMARNSSP) is disordered. The span at 20-31 (VSPNSMARNSSP) shows a compositional bias: polar residues. 4 coiled-coil regions span residues 63–96 (TVLQLQNQKLVQQLDLQKKQLYDVESKIQELQLN), 217–300 (EDAT…KDAA), 437–660 (SRIE…AEME), and 706–737 (SEKQVMEKQLHQVNASVENFKARIAHNEEQMK). The segment at 848–887 (CGVCFDRPKEVVIVKCYHLFCQQCIQRSLEIRHRKCPGCG) adopts an RING-type zinc-finger fold.

This sequence belongs to the BRE1 family. May act as a tetramer consisting of two copies of HUB1 and two copies of HUB2. In terms of tissue distribution, ubiquitously expressed.

It is found in the nucleus. The catalysed reaction is S-ubiquitinyl-[E2 ubiquitin-conjugating enzyme]-L-cysteine + [acceptor protein]-L-lysine = [E2 ubiquitin-conjugating enzyme]-L-cysteine + N(6)-ubiquitinyl-[acceptor protein]-L-lysine.. The protein operates within protein modification; protein ubiquitination. In terms of biological role, E3 ubiquitin-protein ligase that monoubiquitinates H2B to form H2BK143ub1. H2BK143ub1 gives a specific tag for epigenetic transcriptional activation and is also prerequisite for H3K4me and maybe H3K79me. It thereby plays a central role in histone code and gene regulation. Forms a ubiquitin ligase complex in cooperation with the E2 enzyme UBC2/RAD6. The sequence is that of E3 ubiquitin-protein ligase BRE1-like 2 (HUB2) from Arabidopsis thaliana (Mouse-ear cress).